A 63-amino-acid chain; its full sequence is Large ribosomal subunit protein uL29 (63 aa).

Belongs to the universal ribosomal protein uL29 family.

The protein is Large ribosomal subunit protein uL29 of Azotobacter vinelandii (strain DJ / ATCC BAA-1303).